The following is a 271-amino-acid chain: DNA repair protein RecO (271 aa).

Residues 248–271 (AVGVEDSVRQDGDRDSTTRTPSSA) form a disordered region. Residues 253 to 264 (DSVRQDGDRDST) show a composition bias toward basic and acidic residues.

This sequence belongs to the RecO family.

In terms of biological role, involved in DNA repair and RecF pathway recombination. The polypeptide is DNA repair protein RecO (Rhodococcus opacus (strain B4)).